The primary structure comprises 418 residues: D-amino acid dehydrogenase (418 aa).

3–17 is an FAD binding site; sequence VLVLGAGVAGVSSAW.

This sequence belongs to the DadA oxidoreductase family. Requires FAD as cofactor.

The catalysed reaction is a D-alpha-amino acid + A + H2O = a 2-oxocarboxylate + AH2 + NH4(+). It functions in the pathway amino-acid degradation; D-alanine degradation; NH(3) and pyruvate from D-alanine: step 1/1. Its function is as follows. Oxidative deamination of D-amino acids. This Neisseria meningitidis serogroup C / serotype 2a (strain ATCC 700532 / DSM 15464 / FAM18) protein is D-amino acid dehydrogenase.